The sequence spans 809 residues: Probable disease resistance protein At5g66900 (809 aa).

Residues 1 to 150 form the RPW8 domain; that stretch reads MNDWASLGIG…LSKRMDLLSV (150 aa). Positions 50–86 form a coiled coil; that stretch reads PLTQKIDSMQKELDFGVKELKELRDTIERADVAVRKF. NB-ARC domains lie at 153 to 280 and 339 to 438; these read PVFR…DDVW and SPDE…DMWV. ATP is bound at residue 194–201; that stretch reads APPGCGKT. Positions 494–515 form a coiled coil; it reads QSEFKENLERKRLNLEILENTF. 4 LRR repeats span residues 650–672, 674–696, 698–720, and 722–744; these read KLQEIDIDYCYDLDELPYWISEI, SLKTLSITNCNKLSQLPEAIGNL, RLEVLRLCSSMNLSELPEATEGL, and NLRFLDISHCLGLRKLPQEIGKL.

This sequence belongs to the disease resistance NB-LRR family.

Its function is as follows. Probable disease resistance protein. In Arabidopsis thaliana (Mouse-ear cress), this protein is Probable disease resistance protein At5g66900.